Reading from the N-terminus, the 478-residue chain is Protein nucleotidyltransferase YdiU (478 aa).

ATP is bound by residues Gly-84, Gly-86, Arg-87, Lys-107, Asp-119, Gly-120, Arg-170, and Arg-177. Asp-246 serves as the catalytic Proton acceptor. Residues Asn-247 and Asp-256 each coordinate Mg(2+). Asp-256 contributes to the ATP binding site.

The protein belongs to the SELO family. It depends on Mg(2+) as a cofactor. Mn(2+) serves as cofactor.

The catalysed reaction is L-seryl-[protein] + ATP = 3-O-(5'-adenylyl)-L-seryl-[protein] + diphosphate. It catalyses the reaction L-threonyl-[protein] + ATP = 3-O-(5'-adenylyl)-L-threonyl-[protein] + diphosphate. The enzyme catalyses L-tyrosyl-[protein] + ATP = O-(5'-adenylyl)-L-tyrosyl-[protein] + diphosphate. It carries out the reaction L-histidyl-[protein] + UTP = N(tele)-(5'-uridylyl)-L-histidyl-[protein] + diphosphate. The catalysed reaction is L-seryl-[protein] + UTP = O-(5'-uridylyl)-L-seryl-[protein] + diphosphate. It catalyses the reaction L-tyrosyl-[protein] + UTP = O-(5'-uridylyl)-L-tyrosyl-[protein] + diphosphate. Nucleotidyltransferase involved in the post-translational modification of proteins. It can catalyze the addition of adenosine monophosphate (AMP) or uridine monophosphate (UMP) to a protein, resulting in modifications known as AMPylation and UMPylation. The polypeptide is Protein nucleotidyltransferase YdiU (Escherichia coli O1:K1 / APEC).